A 413-amino-acid polypeptide reads, in one-letter code: uncharacterized protein (413 aa).

2 disordered regions span residues 108 to 158 (ESVP…SKIS) and 232 to 257 (DRLG…RLGA). Serine 115 is subject to Phosphoserine. A compositionally biased stretch (polar residues) spans 127 to 139 (SAASRMIANSLNH). At serine 141 the chain carries Phosphoserine. Residue lysine 239 forms a Glycyl lysine isopeptide (Lys-Gly) (interchain with G-Cter in SUMO2) linkage. Serine 269 and serine 296 each carry phosphoserine. The tract at residues 290–336 (RGPTKASAQPALTVKAKAASSATSTATTPKLRRLALPSRPGLQKKPD) is disordered. A compositionally biased stretch (low complexity) spans 302–318 (TVKAKAASSATSTATTP). Serine 342 bears the Phosphoserine mark.

This is an uncharacterized protein from Mus musculus (Mouse).